An 89-amino-acid polypeptide reads, in one-letter code: Small ribosomal subunit protein uS14 (89 aa).

The protein belongs to the universal ribosomal protein uS14 family. Part of the 30S ribosomal subunit. Contacts proteins S3 and S10.

In terms of biological role, binds 16S rRNA, required for the assembly of 30S particles and may also be responsible for determining the conformation of the 16S rRNA at the A site. This is Small ribosomal subunit protein uS14 from Onion yellows phytoplasma (strain OY-M).